The primary structure comprises 270 residues: Tryptophan 2,3-dioxygenase-like protein (270 aa).

The protein belongs to the tryptophan 2,3-dioxygenase family.

In Xanthomonas campestris pv. campestris (strain 8004), this protein is Tryptophan 2,3-dioxygenase-like protein.